The chain runs to 562 residues: Protein wntless (562 aa).

Residues Met-1–Lys-13 are Cytoplasmic-facing. Residues Leu-14 to Leu-34 traverse the membrane as a helical segment. The Lumenal portion of the chain corresponds to Tyr-35–Gln-239. Asn-58 and Asn-103 each carry an N-linked (GlcNAc...) asparagine glycan. A helical transmembrane segment spans residues Val-240–Trp-260. At Arg-261–Pro-270 the chain is on the cytoplasmic side. The helical transmembrane segment at Ala-271–Leu-291 threads the bilayer. The Lumenal segment spans residues Glu-292–Gln-311. Residues Gly-312–Ile-332 form a helical membrane-spanning segment. Residues Gln-333–Arg-344 lie on the Cytoplasmic side of the membrane. The chain crosses the membrane as a helical span at residues Tyr-345–Cys-365. The Lumenal segment spans residues Glu-366–Ser-390. Residues Phe-391–Trp-411 form a helical membrane-spanning segment. Over Lys-412 to Arg-441 the chain is Cytoplasmic. A helical membrane pass occupies residues Phe-442 to Met-462. At Gly-463–Ser-482 the chain is on the lumenal side. Residues Ala-483–Tyr-503 traverse the membrane as a helical segment. The Cytoplasmic portion of the chain corresponds to Ala-504–Asp-562.

The protein belongs to the wntless family. In terms of assembly, interacts with wg; in the Golgi. Interacts with Vps35, a component of the retromer complex; wls stability is regulated by Vps35.

The protein localises to the presynaptic cell membrane. Its subcellular location is the postsynaptic cell membrane. It is found in the cell membrane. The protein resides in the endoplasmic reticulum membrane. It localises to the endosome membrane. The protein localises to the golgi apparatus membrane. Functionally, a segment polarity gene required for wingless (wg)-dependent patterning processes, acting in both wg-sending cells and wg-target cells. In non-neuronal cells wls directs wg secretion. The wls traffic loop encompasses the Golgi, the cell surface, an endocytic compartment and a retrograde route leading back to the Golgi, and involves clathrin-mediated endocytosis and the retromer complex (a conserved protein complex consisting of Vps35 and Vps26). In neuronal cells (the larval motorneuron NMJ), the wg signal moves across the synapse via the release of wls-containing exosome-like vesicles. Postsynaptic wls is required for the trafficking of fz2 through the fz2-interacting protein Grip. This chain is Protein wntless, found in Drosophila virilis (Fruit fly).